The chain runs to 601 residues: Glutathione-regulated potassium-efflux system protein KefB (601 aa).

Transmembrane regions (helical) follow at residues 4 to 24 (ADLL…VPLA), 29 to 49 (IGAV…GLGF), 55 to 75 (EILH…GLEL), 87 to 107 (IFGV…GLLM), 111 to 131 (FLWQ…TAMA), 152 to 172 (VLLF…LLAG), 177 to 197 (HFDW…LIGG), 207 to 227 (FIAA…LVLS), 230 to 250 (LFMD…GVLL), 262 to 282 (AIDP…GMSL), 284 to 304 (LGVL…LVVI), 324 to 344 (MQFA…FSTA), and 356 to 376 (ALLL…MKGI). The region spanning 400 to 519 (KPQVIVVGFG…AGVTQFSRET (120 aa)) is the RCK N-terminal domain.

It belongs to the monovalent cation:proton antiporter 2 (CPA2) transporter (TC 2.A.37) family. KefB subfamily. Interacts with the regulatory subunit KefG.

It is found in the cell inner membrane. Its function is as follows. Pore-forming subunit of a potassium efflux system that confers protection against electrophiles. Catalyzes K(+)/H(+) antiport. This is Glutathione-regulated potassium-efflux system protein KefB from Salmonella heidelberg (strain SL476).